The chain runs to 214 residues: Adenylate kinase (214 aa).

10–15 (GAGKGT) serves as a coordination point for ATP. The segment at 30 to 59 (STGDMLRAAVKSGSELGKQAKDIMDAGKLV) is NMP. AMP-binding positions include threonine 31, arginine 36, 57 to 59 (KLV), 85 to 88 (GFPR), and glutamine 92. The interval 122–159 (GRRVHAPSGRVYHVKFNPPKVEGKDDVTGEELTTRKDD) is LID. ATP contacts are provided by residues arginine 123 and 132–133 (VY). Residues arginine 156 and arginine 167 each contribute to the AMP site. N6-acetyllysine is present on lysine 192. Residue lysine 200 participates in ATP binding.

The protein belongs to the adenylate kinase family. Monomer.

It localises to the cytoplasm. The catalysed reaction is AMP + ATP = 2 ADP. The protein operates within purine metabolism; AMP biosynthesis via salvage pathway; AMP from ADP: step 1/1. Catalyzes the reversible transfer of the terminal phosphate group between ATP and AMP. Plays an important role in cellular energy homeostasis and in adenine nucleotide metabolism. The polypeptide is Adenylate kinase (Escherichia coli O45:K1 (strain S88 / ExPEC)).